The following is a 457-amino-acid chain: UDP-N-acetylglucosamine 1-carboxyvinyltransferase (457 aa).

34–35 (KN) contacts phosphoenolpyruvate. UDP-N-acetyl-alpha-D-glucosamine is bound at residue Arg104. Cys128 serves as the catalytic Proton donor. A 2-(S-cysteinyl)pyruvic acid O-phosphothioketal modification is found at Cys128. UDP-N-acetyl-alpha-D-glucosamine-binding residues include Asp319 and Ile341. Residues 436 to 457 (INKSKNRSSNSKLKEVSEIRAA) are disordered. The segment covering 447 to 457 (KLKEVSEIRAA) has biased composition (basic and acidic residues).

The protein belongs to the EPSP synthase family. MurA subfamily.

The protein resides in the cytoplasm. It catalyses the reaction phosphoenolpyruvate + UDP-N-acetyl-alpha-D-glucosamine = UDP-N-acetyl-3-O-(1-carboxyvinyl)-alpha-D-glucosamine + phosphate. The protein operates within cell wall biogenesis; peptidoglycan biosynthesis. Functionally, cell wall formation. Adds enolpyruvyl to UDP-N-acetylglucosamine. The sequence is that of UDP-N-acetylglucosamine 1-carboxyvinyltransferase from Prochlorococcus marinus subsp. pastoris (strain CCMP1986 / NIES-2087 / MED4).